The primary structure comprises 190 residues: CASP-like protein 1E1 (190 aa).

Residues 1-23 form a disordered region; it reads MEHESKNKVDGMEMEKGKKESGS. At 1 to 28 the chain is on the cytoplasmic side; the sequence is MEHESKNKVDGMEMEKGKKESGSRKGLE. Residues 29 to 49 form a helical membrane-spanning segment; sequence LTMRVLALVLTMVAATVLGVA. Residues 50–83 are Extracellular-facing; sequence KQTKVVPIKLIPTLPPLNVSTTAKASYLSAFVYN. A glycan (N-linked (GlcNAc...) asparagine) is linked at N67. A helical transmembrane segment spans residues 84-104; sequence ISANAIACGYTAISIVIVMIS. Residues 105–111 are Cytoplasmic-facing; that stretch reads KGKRSKS. The chain crosses the membrane as a helical span at residues 112 to 132; that stretch reads LLMAVLIGDLMMVALLFSSTG. At 133-163 the chain is on the extracellular side; it reads AAGAIGLMGRHGNKHVMWKKVCGVFGKFCNQ. A helical transmembrane segment spans residues 164 to 184; that stretch reads AAVSVAITLIASVVFMLLVVL. Residues 185–190 lie on the Cytoplasmic side of the membrane; the sequence is DALKLP.

The protein belongs to the Casparian strip membrane proteins (CASP) family. In terms of assembly, homodimer and heterodimers.

It is found in the cell membrane. The polypeptide is CASP-like protein 1E1 (Arabidopsis thaliana (Mouse-ear cress)).